We begin with the raw amino-acid sequence, 215 residues long: 3-isopropylmalate dehydratase small subunit (215 aa).

It belongs to the LeuD family. LeuD type 1 subfamily. In terms of assembly, heterodimer of LeuC and LeuD.

It catalyses the reaction (2R,3S)-3-isopropylmalate = (2S)-2-isopropylmalate. It functions in the pathway amino-acid biosynthesis; L-leucine biosynthesis; L-leucine from 3-methyl-2-oxobutanoate: step 2/4. Functionally, catalyzes the isomerization between 2-isopropylmalate and 3-isopropylmalate, via the formation of 2-isopropylmaleate. This Xylella fastidiosa (strain M12) protein is 3-isopropylmalate dehydratase small subunit.